Consider the following 201-residue polypeptide: Probable GTP-binding protein EngB (201 aa).

Positions 22–195 (TQPEFAFAGK…WRCIEQFLEV (174 aa)) constitute an EngB-type G domain. GTP-binding positions include 30 to 37 (GKSNVGKS), 57 to 61 (GKTQT), 75 to 78 (DLPG), 142 to 145 (TKLD), and 174 to 176 (FSS). Serine 37 and threonine 59 together coordinate Mg(2+).

Belongs to the TRAFAC class TrmE-Era-EngA-EngB-Septin-like GTPase superfamily. EngB GTPase family. Mg(2+) serves as cofactor.

Its function is as follows. Necessary for normal cell division and for the maintenance of normal septation. This is Probable GTP-binding protein EngB from Lachnoclostridium phytofermentans (strain ATCC 700394 / DSM 18823 / ISDg) (Clostridium phytofermentans).